Consider the following 157-residue polypeptide: Urease accessory protein UreE (157 aa).

This sequence belongs to the UreE family.

It is found in the cytoplasm. In terms of biological role, involved in urease metallocenter assembly. Binds nickel. Probably functions as a nickel donor during metallocenter assembly. The chain is Urease accessory protein UreE from Paenarthrobacter aurescens (strain TC1).